The sequence spans 296 residues: NAD kinase (296 aa).

Residue Asp72 is the Proton acceptor of the active site. Residues 72–73, 146–147, Arg157, Lys174, Asp176, 187–192, and Gln247 each bind NAD(+); these read DG, ND, and TAYALS.

Belongs to the NAD kinase family. A divalent metal cation serves as cofactor.

It is found in the cytoplasm. The catalysed reaction is NAD(+) + ATP = ADP + NADP(+) + H(+). Functionally, involved in the regulation of the intracellular balance of NAD and NADP, and is a key enzyme in the biosynthesis of NADP. Catalyzes specifically the phosphorylation on 2'-hydroxyl of the adenosine moiety of NAD to yield NADP. This chain is NAD kinase, found in Pseudomonas fluorescens (strain SBW25).